A 245-amino-acid chain; its full sequence is Probable 2-phosphosulfolactate phosphatase (245 aa).

It belongs to the ComB family. Mg(2+) is required as a cofactor.

It catalyses the reaction (2R)-O-phospho-3-sulfolactate + H2O = (2R)-3-sulfolactate + phosphate. The protein is Probable 2-phosphosulfolactate phosphatase of Nostoc sp. (strain PCC 7120 / SAG 25.82 / UTEX 2576).